The following is a 344-amino-acid chain: Phosphate acyltransferase (344 aa).

Belongs to the PlsX family. As to quaternary structure, homodimer. Probably interacts with PlsY.

It localises to the cytoplasm. It catalyses the reaction a fatty acyl-[ACP] + phosphate = an acyl phosphate + holo-[ACP]. The protein operates within lipid metabolism; phospholipid metabolism. In terms of biological role, catalyzes the reversible formation of acyl-phosphate (acyl-PO(4)) from acyl-[acyl-carrier-protein] (acyl-ACP). This enzyme utilizes acyl-ACP as fatty acyl donor, but not acyl-CoA. This is Phosphate acyltransferase from Cronobacter sakazakii (strain ATCC BAA-894) (Enterobacter sakazakii).